A 105-amino-acid polypeptide reads, in one-letter code: U-scoloptoxin(10)-Sm3a (105 aa).

The first 23 residues, 1 to 23 (MYKFIFIFFTVFFLINIIEESXT), serve as a signal peptide directing secretion.

The protein belongs to the scoloptoxin-10 family. In terms of processing, contains 3 disulfide bonds. In terms of tissue distribution, expressed by the venom gland.

The protein localises to the secreted. The chain is U-scoloptoxin(10)-Sm3a from Scolopendra morsitans (Tanzanian blue ringleg centipede).